Reading from the N-terminus, the 218-residue chain is Probable nicotinate-nucleotide adenylyltransferase (218 aa).

The protein belongs to the NadD family.

The catalysed reaction is nicotinate beta-D-ribonucleotide + ATP + H(+) = deamido-NAD(+) + diphosphate. It functions in the pathway cofactor biosynthesis; NAD(+) biosynthesis; deamido-NAD(+) from nicotinate D-ribonucleotide: step 1/1. In terms of biological role, catalyzes the reversible adenylation of nicotinate mononucleotide (NaMN) to nicotinic acid adenine dinucleotide (NaAD). This Corynebacterium glutamicum (strain ATCC 13032 / DSM 20300 / JCM 1318 / BCRC 11384 / CCUG 27702 / LMG 3730 / NBRC 12168 / NCIMB 10025 / NRRL B-2784 / 534) protein is Probable nicotinate-nucleotide adenylyltransferase.